We begin with the raw amino-acid sequence, 155 residues long: MKVEVDSFSGAKIYPGRGTLFVRGDSKIFRFQNSKSASLFKQRKNPRRIAWTVLFRKHHKKGITEEVAKKRSRKTVKAQRPITGASLDLIKERRSLKPEVRKANREEKLKANKEKKRAEKAARKAEKAKSAGVQGSKVSKQQAKGAFQKVAATSR.

At serine 7 the chain carries Phosphoserine. The segment at glutamate 66–arginine 155 is disordered. The span at leucine 89–lysine 129 shows a compositional bias: basic and acidic residues.

This sequence belongs to the eukaryotic ribosomal protein eL24 family. As to quaternary structure, component of the large ribosomal subunit (LSU). Mature yeast ribosomes consist of a small (40S) and a large (60S) subunit. The 40S small subunit contains 1 molecule of ribosomal RNA (18S rRNA) and 33 different proteins (encoded by 57 genes). The large 60S subunit contains 3 rRNA molecules (25S, 5.8S and 5S rRNA) and 46 different proteins (encoded by 81 genes).

Its subcellular location is the cytoplasm. Functionally, component of the ribosome, a large ribonucleoprotein complex responsible for the synthesis of proteins in the cell. The small ribosomal subunit (SSU) binds messenger RNAs (mRNAs) and translates the encoded message by selecting cognate aminoacyl-transfer RNA (tRNA) molecules. The large subunit (LSU) contains the ribosomal catalytic site termed the peptidyl transferase center (PTC), which catalyzes the formation of peptide bonds, thereby polymerizing the amino acids delivered by tRNAs into a polypeptide chain. The nascent polypeptides leave the ribosome through a tunnel in the LSU and interact with protein factors that function in enzymatic processing, targeting, and the membrane insertion of nascent chains at the exit of the ribosomal tunnel. This Saccharomyces cerevisiae (strain ATCC 204508 / S288c) (Baker's yeast) protein is Large ribosomal subunit protein eL24B.